The primary structure comprises 398 residues: Methionine aminopeptidase 1A (398 aa).

The residue at position 2 (alanine 2) is an N-acetylalanine. The C6H2-type zinc-finger motif lies at 12-65 (TLSCARCEKPAHLQCPKCIDLKLPREQASFCTQECFKAAWSSHKSVHVKAQLSS). Residues cysteine 15, cysteine 18, cysteine 26, cysteine 29, cysteine 42, cysteine 46, histidine 54, and histidine 58 each coordinate Zn(2+). Histidine 214 provides a ligand contact to a protein. Positions 231, 242, and 305 each coordinate Zn(2+). Histidine 312 serves as a coordination point for a protein. Residues glutamate 338 and glutamate 369 each coordinate Zn(2+).

Belongs to the peptidase M24A family. Methionine aminopeptidase type 1 subfamily. Associates with the 60S ribosomal subunit of the 80S translational complex. Requires Zn(2+) as cofactor. Co(2+) is required as a cofactor. It depends on Mn(2+) as a cofactor. The cofactor is Fe(2+). In terms of tissue distribution, ubiquitous.

The protein resides in the cytoplasm. It carries out the reaction Release of N-terminal amino acids, preferentially methionine, from peptides and arylamides.. In terms of biological role, cotranslationally removes the N-terminal methionine from nascent proteins. The N-terminal methionine is often cleaved when the second residue in the primary sequence is small and uncharged (Met-Ala-, Cys, Gly, Pro, Ser, Thr, or Val). The protein is Methionine aminopeptidase 1A (MAP1A) of Arabidopsis thaliana (Mouse-ear cress).